Consider the following 239-residue polypeptide: LexA repressor (239 aa).

The segment at residues 26–46 (FDEMKDALDLASKSGIHRLIT) is a DNA-binding region (H-T-H motif). Residues serine 159 and lysine 197 each act as for autocatalytic cleavage activity in the active site.

The protein belongs to the peptidase S24 family. Homodimer.

The catalysed reaction is Hydrolysis of Ala-|-Gly bond in repressor LexA.. In terms of biological role, represses a number of genes involved in the response to DNA damage (SOS response), including recA and lexA. In the presence of single-stranded DNA, RecA interacts with LexA causing an autocatalytic cleavage which disrupts the DNA-binding part of LexA, leading to derepression of the SOS regulon and eventually DNA repair. The polypeptide is LexA repressor (Rhizobium etli (strain ATCC 51251 / DSM 11541 / JCM 21823 / NBRC 15573 / CFN 42)).